The primary structure comprises 505 residues: Ion-translocating oxidoreductase complex subunit C (505 aa).

2 4Fe-4S ferredoxin-type domains span residues 381-410 (ELNN…EQLY) and 420-449 (KTQI…MSYY). Cys390, Cys393, Cys396, Cys400, Cys429, Cys432, Cys435, and Cys439 together coordinate [4Fe-4S] cluster.

This sequence belongs to the 4Fe4S bacterial-type ferredoxin family. RnfC subfamily. As to quaternary structure, the complex is composed of six subunits: RnfA, RnfB, RnfC, RnfD, RnfE and RnfG. It depends on [4Fe-4S] cluster as a cofactor.

The protein localises to the cell inner membrane. In terms of biological role, part of a membrane-bound complex that couples electron transfer with translocation of ions across the membrane. In Buchnera aphidicola subsp. Baizongia pistaciae (strain Bp), this protein is Ion-translocating oxidoreductase complex subunit C.